The primary structure comprises 750 residues: Catalase A (750 aa).

The segment at 30 to 49 is disordered; it reads ERDTADAHTQQPLTTDHGVR. Residues His93 and Asn166 contribute to the active site. Tyr380 serves as a coordination point for heme.

This sequence belongs to the catalase family. Requires heme as cofactor.

Its subcellular location is the peroxisome matrix. It catalyses the reaction 2 H2O2 = O2 + 2 H2O. Catalyzes the degradation of hydrogen peroxide (H(2)O(2)) generated by peroxisomal oxidases to water and oxygen, thereby protecting cells from the toxic effects of hydrogen peroxide. The polypeptide is Catalase A (catA) (Aspergillus fumigatus (strain ATCC MYA-4609 / CBS 101355 / FGSC A1100 / Af293) (Neosartorya fumigata)).